The following is a 936-amino-acid chain: General transcription factor II-I repeat domain-containing protein 2 (936 aa).

Residues Glu95–Gly189 form a GTF2I-like 1 repeat. Residues Pro199–Thr222 are disordered. One copy of the GTF2I-like 2 repeat lies at Leu319–Gly413.

The protein belongs to the TFII-I family. As to expression, ubiquitous.

The protein localises to the nucleus. The protein is General transcription factor II-I repeat domain-containing protein 2 (Gtf2ird2) of Mus musculus (Mouse).